The sequence spans 340 residues: Anthranilate phosphoribosyltransferase (340 aa).

5-phospho-alpha-D-ribose 1-diphosphate-binding positions include G79, 82-83 (GD), T87, 89-92 (NIST), 107-115 (KHGNRAVTG), and S119. G79 serves as a coordination point for anthranilate. Mg(2+) is bound at residue S91. Anthranilate is bound at residue N110. R165 is a binding site for anthranilate. Mg(2+) is bound by residues D224 and E225.

Belongs to the anthranilate phosphoribosyltransferase family. Homodimer. Requires Mg(2+) as cofactor.

The enzyme catalyses N-(5-phospho-beta-D-ribosyl)anthranilate + diphosphate = 5-phospho-alpha-D-ribose 1-diphosphate + anthranilate. The protein operates within amino-acid biosynthesis; L-tryptophan biosynthesis; L-tryptophan from chorismate: step 2/5. In terms of biological role, catalyzes the transfer of the phosphoribosyl group of 5-phosphorylribose-1-pyrophosphate (PRPP) to anthranilate to yield N-(5'-phosphoribosyl)-anthranilate (PRA). The polypeptide is Anthranilate phosphoribosyltransferase (Syntrophomonas wolfei subsp. wolfei (strain DSM 2245B / Goettingen)).